We begin with the raw amino-acid sequence, 742 residues long: 5-methyltetrahydropteroyltriglutamate--homocysteine methyltransferase (742 aa).

Residues 18–21 (REWK) and K112 each bind 5-methyltetrahydropteroyltri-L-glutamate. L-homocysteine-binding positions include 420–422 (IGS) and E473. L-methionine is bound by residues 420 to 422 (IGS) and E473. Residue W550 participates in 5-methyltetrahydropteroyltri-L-glutamate binding. L-homocysteine is bound at residue D588. Residue D588 coordinates L-methionine. E594 is a 5-methyltetrahydropteroyltri-L-glutamate binding site. Zn(2+)-binding residues include H630, C632, and E654. The Proton donor role is filled by H683. C715 lines the Zn(2+) pocket.

It belongs to the vitamin-B12 independent methionine synthase family. Zn(2+) serves as cofactor.

It carries out the reaction 5-methyltetrahydropteroyltri-L-glutamate + L-homocysteine = tetrahydropteroyltri-L-glutamate + L-methionine. It functions in the pathway amino-acid biosynthesis; L-methionine biosynthesis via de novo pathway; L-methionine from L-homocysteine (MetE route): step 1/1. Functionally, catalyzes the transfer of a methyl group from 5-methyltetrahydrofolate to homocysteine resulting in methionine formation. In Staphylococcus aureus (strain JH9), this protein is 5-methyltetrahydropteroyltriglutamate--homocysteine methyltransferase.